The primary structure comprises 633 residues: 1-deoxy-D-xylulose-5-phosphate synthase (633 aa).

Over residues 1–12 (MSEPTANLQPAS) the composition is skewed to polar residues. The disordered stretch occupies residues 1–21 (MSEPTANLQPASRTPLLDRVN). Thiamine diphosphate contacts are provided by residues histidine 86 and 127 to 129 (GHA). A Mg(2+)-binding site is contributed by aspartate 158. Residues 159–160 (GS), asparagine 187, and glutamate 377 each bind thiamine diphosphate. Residue asparagine 187 coordinates Mg(2+).

This sequence belongs to the transketolase family. DXPS subfamily. In terms of assembly, homodimer. Requires Mg(2+) as cofactor. The cofactor is thiamine diphosphate.

It catalyses the reaction D-glyceraldehyde 3-phosphate + pyruvate + H(+) = 1-deoxy-D-xylulose 5-phosphate + CO2. It participates in metabolic intermediate biosynthesis; 1-deoxy-D-xylulose 5-phosphate biosynthesis; 1-deoxy-D-xylulose 5-phosphate from D-glyceraldehyde 3-phosphate and pyruvate: step 1/1. Its function is as follows. Catalyzes the acyloin condensation reaction between C atoms 2 and 3 of pyruvate and glyceraldehyde 3-phosphate to yield 1-deoxy-D-xylulose-5-phosphate (DXP). The polypeptide is 1-deoxy-D-xylulose-5-phosphate synthase (Deinococcus geothermalis (strain DSM 11300 / CIP 105573 / AG-3a)).